We begin with the raw amino-acid sequence, 175 residues long: uncharacterized protein (175 aa).

2 helical membrane-spanning segments follow: residues 21-41 (IVLDFPSFLVGCVFTTMMGPI) and 50-70 (LVGLITVCKFLVIIGSIVFVI).

It localises to the membrane. This is an uncharacterized protein from Saccharomyces cerevisiae (strain ATCC 204508 / S288c) (Baker's yeast).